A 99-amino-acid chain; its full sequence is Leydig cell tumor 10 kDa protein homolog (99 aa).

The interval 1–37 is disordered; sequence MAQGQRKFQARKPAKSKTAATASEKNRGPRKGGRVIA. Residues 28 to 37 are compositionally biased toward basic residues; sequence GPRKGGRVIA.

This sequence belongs to the UPF0390 family.

Functionally, may have a potential role in hypercalcemia of malignancy. The sequence is that of Leydig cell tumor 10 kDa protein homolog from Pongo abelii (Sumatran orangutan).